A 398-amino-acid polypeptide reads, in one-letter code: Tyrosine--tRNA ligase (398 aa).

Positions 48–57 match the 'HIGH' region motif; it reads PTGADIHLGH. Residues 235 to 239 carry the 'KMSKS' region motif; sequence KMSKS. Lysine 238 is an ATP binding site. Residues 334 to 398 enclose the S4 RNA-binding domain; it reads VKLAYLLGAT…GKNKFMRLVP (65 aa).

This sequence belongs to the class-I aminoacyl-tRNA synthetase family. TyrS type 2 subfamily. In terms of assembly, homodimer.

It localises to the cytoplasm. It catalyses the reaction tRNA(Tyr) + L-tyrosine + ATP = L-tyrosyl-tRNA(Tyr) + AMP + diphosphate + H(+). Functionally, catalyzes the attachment of tyrosine to tRNA(Tyr) in a two-step reaction: tyrosine is first activated by ATP to form Tyr-AMP and then transferred to the acceptor end of tRNA(Tyr). The chain is Tyrosine--tRNA ligase from Nostoc sp. (strain PCC 7120 / SAG 25.82 / UTEX 2576).